The following is a 96-amino-acid chain: Elicitor peptide 3 (96 aa).

The propeptide occupies methionine 1–isoleucine 73. The interval serine 32 to asparagine 96 is disordered. Positions glutamate 35–serine 49 are enriched in low complexity. Acidic residues predominate over residues glutamate 52–methionine 71.

The protein belongs to the brassicaceae elicitor peptide family.

In terms of biological role, elicitor of plant defense. In Arabidopsis thaliana (Mouse-ear cress), this protein is Elicitor peptide 3 (PEP3).